We begin with the raw amino-acid sequence, 643 residues long: MDSTDKKVQVASRLPVPPKRKYVSNDENQEQMQRKRLRSSLESELPAVRVAASIATSKPRAAPVAALPKPQVIGRQSLAVMRPKNSGPGITSTSFSGKTKVSSSVTQPAAIGAEKKKRAAWDLKGQVNDMRDTVSNYKGKMQNLTGENARLLNSKEKLQREVEVLASENSKLSQERCTLESQLREVRQQVSTFEREVARLTELCQRQEKELSSHTNTIEELQGANAILTKQLLDKEVKLDCVSGENTSLKHTVNEQTDEIAALKVCLAEKDTEVHSLDTERRRLHNLVQELKGNIRVFCRVRPTLTPERELPAGHISFPSNDGKAIVLSKMEESHIGREKKDAVKYDFNFDCVFPPPCSQESVFEEISLLVQSALDGYPVCIFAYGQTGSGKTYTMEGPEDVTDDSMGMIPRAIHQIFSSAEELKAKGWQYTFTASFLEIYNETIRDLLINRPDKKLEYEIRKVNSANMLLYVTNLRYVKVSCVEEVHELLKIAKANRSVAKTAINDRSSRSHSVFQLKIEGENKQRDLKTSSMISLIDLAGSERLDRSLSTGDRLKETQCINTSLSTLGMVITSLCNKDSHIPYRNSKLTYLLQNSLGGNAKVLMFVNISPLEENFAESLNSLRFASKVNECVIGTARANRK.

Disordered regions lie at residues 1 to 42 (MDST…SSLE) and 81 to 101 (MRPK…KTKV). A globular region spans residues 1–116 (MDSTDKKVQV…QPAAIGAEKK (116 aa)). The span at 88–101 (PGITSTSFSGKTKV) shows a compositional bias: polar residues. Residues 117–296 (KRAAWDLKGQ…LVQELKGNIR (180 aa)) adopt a coiled-coil conformation. Residues 294 to 633 (NIRVFCRVRP…LRFASKVNEC (340 aa)) enclose the Kinesin motor domain. 386–393 (GQTGSGKT) serves as a coordination point for ATP.

It belongs to the TRAFAC class myosin-kinesin ATPase superfamily. Kinesin family. NCD subfamily.

The protein localises to the cytoplasm. The protein resides in the cytoskeleton. In terms of biological role, promotes mitotic spindle assembly. This chain is Carboxy-terminal kinesin 2, found in Xenopus laevis (African clawed frog).